We begin with the raw amino-acid sequence, 242 residues long: Ribosomal RNA small subunit methyltransferase G (242 aa).

Residues Gly-79, 130–131, and Gln-149 each bind S-adenosyl-L-methionine; that span reads VE.

It belongs to the methyltransferase superfamily. RNA methyltransferase RsmG family.

It is found in the cytoplasm. Its function is as follows. Specifically methylates the N7 position of a guanine in 16S rRNA. The polypeptide is Ribosomal RNA small subunit methyltransferase G (Mycoplasmoides gallisepticum (strain R(low / passage 15 / clone 2)) (Mycoplasma gallisepticum)).